The chain runs to 243 residues: NifU-like scaffold protein (243 aa).

Belongs to the NifU family. As to quaternary structure, homodimer.

The protein resides in the plastid. It localises to the apicoplast. It participates in cofactor biosynthesis; iron-sulfur cluster biosynthesis. Its function is as follows. Binds and transfers [4Fe-4S] iron-sulfur clusters to target proteins. The chain is NifU-like scaffold protein from Plasmodium berghei (strain Anka).